We begin with the raw amino-acid sequence, 294 residues long: 4-diphosphocytidyl-2-C-methyl-D-erythritol kinase (294 aa).

K15 is a catalytic residue. 101–111 (PSEAGLGGGSS) provides a ligand contact to ATP. The active site involves D143.

This sequence belongs to the GHMP kinase family. IspE subfamily.

It carries out the reaction 4-CDP-2-C-methyl-D-erythritol + ATP = 4-CDP-2-C-methyl-D-erythritol 2-phosphate + ADP + H(+). It participates in isoprenoid biosynthesis; isopentenyl diphosphate biosynthesis via DXP pathway; isopentenyl diphosphate from 1-deoxy-D-xylulose 5-phosphate: step 3/6. Its function is as follows. Catalyzes the phosphorylation of the position 2 hydroxy group of 4-diphosphocytidyl-2C-methyl-D-erythritol. The protein is 4-diphosphocytidyl-2-C-methyl-D-erythritol kinase of Fusobacterium nucleatum subsp. nucleatum (strain ATCC 25586 / DSM 15643 / BCRC 10681 / CIP 101130 / JCM 8532 / KCTC 2640 / LMG 13131 / VPI 4355).